Here is an 859-residue protein sequence, read N- to C-terminus: Magnesium transporter ALR1 (859 aa).

A compositionally biased stretch (low complexity) spans 1-20; it reads MSSSSSSSESSPNLSRSNSL. Disordered regions lie at residues 1–281 and 330–399; these read MSSS…MPPQ and TSST…NIPS. Ser2 is modified (N-acetylserine). Composition is skewed to basic and acidic residues over residues 28–42 and 55–73; these read KTED…RQHP and KNKE…EQKS. Tyr77 is modified (phosphotyrosine). At Ser85 the chain carries Phosphoserine. A compositionally biased stretch (basic and acidic residues) spans 144-154; it reads PPKDVGVKRDY. Residues 157–176 show a composition bias toward low complexity; the sequence is SSSTASSGNKSKLSASSSAS. Phosphoserine occurs at positions 185 and 188. The segment covering 193–203 has biased composition (basic and acidic residues); it reads IPHESKSDTHS. Positions 213 to 235 are enriched in polar residues; that stretch reads YSTTSAHSSINPAVLLTKSTSQK. 3 positions are modified to phosphoserine: Ser220, Ser221, and Ser236. Thr242 carries the phosphothreonine modification. Residues 252 to 265 are compositionally biased toward polar residues; it reads TRASFDSDVSQASR. Residues 330-339 are compositionally biased toward low complexity; the sequence is TSSTSTSGSS. A compositionally biased stretch (basic and acidic residues) spans 353 to 375; that stretch reads EKSESTNETEIHEKKEDEHEKIK. 2 consecutive transmembrane segments (helical) span residues 744-764 and 773-793; these read TMIG…GMNV and IAWW…GWFL. The tract at residues 830-859 is disordered; it reads FNDRSKNINVRAGPSNKSVASLPSRYSRYD. Ser850 carries the phosphoserine modification.

The protein belongs to the CorA metal ion transporter (MIT) (TC 1.A.35) family.

It is found in the cell membrane. Functionally, plasma membrane magnesium transporter. The chain is Magnesium transporter ALR1 (ALR1) from Saccharomyces cerevisiae (strain ATCC 204508 / S288c) (Baker's yeast).